A 311-amino-acid chain; its full sequence is Tricarboxylate transport protein, mitochondrial (311 aa).

A propeptide spans 1 to 13 (MAAPRAPRALTAA) (removed in mature form). 3 Solcar repeats span residues 23-111 (THPG…LSNH), 122-208 (RRGL…LRNW), and 218-303 (MNPL…VVKL). The next 3 helical transmembrane spans lie at 29-46 (ILAGGLAGGIEICITFPT), 86-105 (GLSSLLYGSIPKAAVRFGMF), and 129-143 (LGAGVAEAVVVVCPM). Phosphoserine is present on Ser-156. Transmembrane regions (helical) follow at residues 183-202 (GLTATVLKQGSNQAIRFFVM), 224-241 (GVFGAVAGAASVFGNTPL), and 278-297 (GTVPRLGRVCLDVAIVFVIY).

This sequence belongs to the mitochondrial carrier (TC 2.A.29) family. Possesses a short cleavable presequence, which, however, is found to be dispensable both for targeting to mitochondria and insertion into the inner membrane. However, the presequence is required to keep SLC25A1 in a soluble state and thus in an import-competent state. Mature SLC25A1 lacking the presequence is prone to aggregation.

The protein localises to the mitochondrion inner membrane. It catalyses the reaction (S)-malate(in) + citrate(out) = (S)-malate(out) + citrate(in). The enzyme catalyses citrate(out) + succinate(in) = citrate(in) + succinate(out). The catalysed reaction is D-threo-isocitrate(in) + citrate(out) = D-threo-isocitrate(out) + citrate(in). It carries out the reaction cis-aconitate(in) + citrate(out) = cis-aconitate(out) + citrate(in). It catalyses the reaction trans-aconitate(in) + citrate(out) = trans-aconitate(out) + citrate(in). The enzyme catalyses phosphoenolpyruvate(in) + citrate(out) = phosphoenolpyruvate(out) + citrate(in). The catalysed reaction is maleate(in) + citrate(out) = maleate(out) + citrate(in). Its function is as follows. Mitochondrial electroneutral antiporter that exports citrate from the mitochondria into the cytosol in exchange for malate. Also able to mediate the exchange of citrate for isocitrate, phosphoenolpyruvate, cis-aconitate and to a lesser extent trans-aconitate, maleate and succinate. In the cytoplasm, citrate plays important roles in fatty acid and sterol synthesis, regulation of glycolysis, protein acetylation, and other physiopathological processes. This Rattus norvegicus (Rat) protein is Tricarboxylate transport protein, mitochondrial (Slc25a1).